The primary structure comprises 113 residues: Putative anti-sigma factor antagonist TM_1081 (113 aa).

Residues 1–110 (MFPYKIVDDV…DTISEAMEEV (110 aa)) form the STAS domain. Ser55 carries the phosphoserine modification.

This sequence belongs to the anti-sigma-factor antagonist family. Post-translationally, phosphorylated on a serine residue.

In terms of biological role, in the phosphorylated form it could act as an anti-anti-sigma factor that counteracts an anti-sigma factor and thus releases a sigma factor from inhibition. This is Putative anti-sigma factor antagonist TM_1081 from Thermotoga maritima (strain ATCC 43589 / DSM 3109 / JCM 10099 / NBRC 100826 / MSB8).